The following is a 470-amino-acid chain: Uronate isomerase (470 aa).

Belongs to the metallo-dependent hydrolases superfamily. Uronate isomerase family.

The catalysed reaction is D-glucuronate = D-fructuronate. The enzyme catalyses aldehydo-D-galacturonate = keto-D-tagaturonate. It participates in carbohydrate metabolism; pentose and glucuronate interconversion. The chain is Uronate isomerase from Escherichia coli O8 (strain IAI1).